We begin with the raw amino-acid sequence, 291 residues long: N-acetylmannosamine kinase (291 aa).

Residues 5–12 (AIDIGGTK) and 132–139 (GVGGGVVS) each bind ATP. Residues histidine 156, cysteine 166, cysteine 168, and cysteine 173 each coordinate Zn(2+).

The protein belongs to the ROK (NagC/XylR) family. NanK subfamily. Homodimer.

The enzyme catalyses an N-acyl-D-mannosamine + ATP = an N-acyl-D-mannosamine 6-phosphate + ADP + H(+). Its pathway is amino-sugar metabolism; N-acetylneuraminate degradation; D-fructose 6-phosphate from N-acetylneuraminate: step 2/5. Functionally, catalyzes the phosphorylation of N-acetylmannosamine (ManNAc) to ManNAc-6-P. This Escherichia coli (strain K12 / MC4100 / BW2952) protein is N-acetylmannosamine kinase.